Consider the following 357-residue polypeptide: Thiamine thiazole synthase 3, chloroplastic (357 aa).

The transit peptide at 1–51 (MSISAAGVATGLGANVELKSNVGSSSSSVAGVRLFTSRKAQLRRCAAPATS) directs the protein to the chloroplast. Substrate contacts are provided by residues A103, 123 to 124 (EQ), G131, and A196. 2,3-didehydroalanine (Cys) is present on C225. Substrate-binding positions include D227, H242, M294, and 304–306 (RMG).

Belongs to the THI4 family. In terms of assembly, homooctamer. Fe cation serves as cofactor. In terms of processing, during the catalytic reaction, a sulfide is transferred from Cys-225 to a reaction intermediate, generating a dehydroalanine residue.

Its subcellular location is the plastid. It is found in the chloroplast. The catalysed reaction is [ADP-thiazole synthase]-L-cysteine + glycine + NAD(+) = [ADP-thiazole synthase]-dehydroalanine + ADP-5-ethyl-4-methylthiazole-2-carboxylate + nicotinamide + 3 H2O + 2 H(+). In terms of biological role, involved in biosynthesis of the thiamine precursor thiazole. Catalyzes the conversion of NAD and glycine to adenosine diphosphate 5-(2-hydroxyethyl)-4-methylthiazole-2-carboxylic acid (ADT), an adenylated thiazole intermediate. The reaction includes an iron-dependent sulfide transfer from a conserved cysteine residue of the protein to a thiazole intermediate. The enzyme can only undergo a single turnover, which suggests it is a suicide enzyme. May have additional roles in adaptation to various stress conditions and in DNA damage tolerance. The sequence is that of Thiamine thiazole synthase 3, chloroplastic from Physcomitrium patens (Spreading-leaved earth moss).